The primary structure comprises 329 residues: Phosphoenolpyruvate transferase (329 aa).

Position 61 (D61) interacts with 7,8-didemethyl-8-hydroxy-5-deazariboflavin.

Belongs to the CofD family. Homodimer. It depends on Mg(2+) as a cofactor.

The catalysed reaction is enolpyruvoyl-2-diphospho-5'-guanosine + 7,8-didemethyl-8-hydroxy-5-deazariboflavin = dehydro coenzyme F420-0 + GMP + H(+). It participates in cofactor biosynthesis; coenzyme F420 biosynthesis. In terms of biological role, catalyzes the transfer of the phosphoenolpyruvate moiety from enoylpyruvoyl-2-diphospho-5'-guanosine (EPPG) to 7,8-didemethyl-8-hydroxy-5-deazariboflavin (FO) with the formation of dehydro coenzyme F420-0 and GMP. This chain is Phosphoenolpyruvate transferase, found in Mycobacterium marinum (strain ATCC BAA-535 / M).